The primary structure comprises 522 residues: Gypsy retrotransposon integrase-like protein 1 (522 aa).

In terms of domain architecture, Integrase catalytic spans 135-292; the sequence is KVENPWSLVT…TPYFQMFSRN (158 aa).

This is Gypsy retrotransposon integrase-like protein 1 (GIN1) from Macaca fascicularis (Crab-eating macaque).